The following is a 343-amino-acid chain: Heat-inducible transcription repressor HrcA (343 aa).

It belongs to the HrcA family.

Its function is as follows. Negative regulator of class I heat shock genes (grpE-dnaK-dnaJ and groELS operons). Prevents heat-shock induction of these operons. The protein is Heat-inducible transcription repressor HrcA of Thermobifida fusca (strain YX).